Reading from the N-terminus, the 164-residue chain is UPF0304 protein Ent638_2838 (164 aa).

Belongs to the UPF0304 family.

In Enterobacter sp. (strain 638), this protein is UPF0304 protein Ent638_2838.